The primary structure comprises 98 residues: NADH-ubiquinone oxidoreductase chain 4L (98 aa).

3 consecutive transmembrane segments (helical) span residues 1 to 21, 29 to 49, and 61 to 81; these read MALTYMNMALAFTVSLLGLLM, SLLCLEGMMLSLFVTMSLTIL, and IILLVFAACEAALGLSLLVMV.

It belongs to the complex I subunit 4L family. As to quaternary structure, core subunit of respiratory chain NADH dehydrogenase (Complex I) which is composed of 45 different subunits.

It localises to the mitochondrion inner membrane. The catalysed reaction is a ubiquinone + NADH + 5 H(+)(in) = a ubiquinol + NAD(+) + 4 H(+)(out). Core subunit of the mitochondrial membrane respiratory chain NADH dehydrogenase (Complex I) which catalyzes electron transfer from NADH through the respiratory chain, using ubiquinone as an electron acceptor. Part of the enzyme membrane arm which is embedded in the lipid bilayer and involved in proton translocation. The chain is NADH-ubiquinone oxidoreductase chain 4L (MT-ND4L) from Pteropus dasymallus (Ryukyu flying fox).